A 64-amino-acid chain; its full sequence is Small ribosomal subunit protein eS17 (64 aa).

Belongs to the eukaryotic ribosomal protein eS17 family.

This Halorubrum lacusprofundi (strain ATCC 49239 / DSM 5036 / JCM 8891 / ACAM 34) protein is Small ribosomal subunit protein eS17.